A 259-amino-acid chain; its full sequence is Small ribosomal subunit protein mS23 (259 aa).

Residues 230 to 244 (RAASFTGSALPSSEE) show a composition bias toward polar residues. The disordered stretch occupies residues 230-259 (RAASFTGSALPSSEESAPVDEETEKVPQQV).

This sequence belongs to the mitochondrion-specific ribosomal protein mS23 family. As to quaternary structure, component of the mitochondrial small ribosomal subunit.

It is found in the mitochondrion. The sequence is that of Small ribosomal subunit protein mS23 (rsm25) from Aspergillus terreus (strain NIH 2624 / FGSC A1156).